The chain runs to 114 residues: Large ribosomal subunit protein uL22 (114 aa).

Belongs to the universal ribosomal protein uL22 family. Part of the 50S ribosomal subunit.

Functionally, this protein binds specifically to 23S rRNA; its binding is stimulated by other ribosomal proteins, e.g. L4, L17, and L20. It is important during the early stages of 50S assembly. It makes multiple contacts with different domains of the 23S rRNA in the assembled 50S subunit and ribosome. Its function is as follows. The globular domain of the protein is located near the polypeptide exit tunnel on the outside of the subunit, while an extended beta-hairpin is found that lines the wall of the exit tunnel in the center of the 70S ribosome. In Streptococcus agalactiae serotype Ia (strain ATCC 27591 / A909 / CDC SS700), this protein is Large ribosomal subunit protein uL22.